We begin with the raw amino-acid sequence, 418 residues long: UDP-N-acetylglucosamine 1-carboxyvinyltransferase (418 aa).

22–23 provides a ligand contact to phosphoenolpyruvate; the sequence is KN. A UDP-N-acetyl-alpha-D-glucosamine-binding site is contributed by Arg92. Cys116 serves as the catalytic Proton donor. At Cys116 the chain carries 2-(S-cysteinyl)pyruvic acid O-phosphothioketal. Residues 121-125, Asp305, and Leu327 contribute to the UDP-N-acetyl-alpha-D-glucosamine site; that span reads RPIDL.

It belongs to the EPSP synthase family. MurA subfamily.

Its subcellular location is the cytoplasm. The enzyme catalyses phosphoenolpyruvate + UDP-N-acetyl-alpha-D-glucosamine = UDP-N-acetyl-3-O-(1-carboxyvinyl)-alpha-D-glucosamine + phosphate. Its pathway is cell wall biogenesis; peptidoglycan biosynthesis. In terms of biological role, cell wall formation. Adds enolpyruvyl to UDP-N-acetylglucosamine. The polypeptide is UDP-N-acetylglucosamine 1-carboxyvinyltransferase (Campylobacter jejuni subsp. jejuni serotype O:23/36 (strain 81-176)).